The sequence spans 402 residues: Prostaglandin E2 receptor EP1 subtype (402 aa).

The Extracellular portion of the chain corresponds to 1–35 (MSPCGPLNLSLAGEATTCAAPWVPNTSAVPPSGAS). Residues Asn-8 and Asn-25 are each glycosylated (N-linked (GlcNAc...) asparagine). Residues 36–62 (PALPIFSMTLGAVSNLLALALLAQAAG) traverse the membrane as a helical segment. The Cytoplasmic portion of the chain corresponds to 63 to 72 (RLRRRRSAAT). The chain crosses the membrane as a helical span at residues 73–96 (FLLFVASLLATDLAGHVIPGALVL). Topologically, residues 97–111 (RLYTAGRAPAGGACH) are extracellular. Cysteines 110 and 188 form a disulfide. Residues 112–133 (FLGGCMVFFGLCPLLLGCGMAV) form a helical membrane-spanning segment. Residues 134–155 (ERCVGVTRPLLHAARVSVARAR) lie on the Cytoplasmic side of the membrane. Residues 156-177 (LALAAVAAVALAVALLPLARVG) traverse the membrane as a helical segment. Residues 178 to 201 (RYELQYPGTWCFIGLGPPGGWRQA) lie on the Extracellular side of the membrane. The helical transmembrane segment at 202–227 (LLAGLFASLGLVALLAALVCNTLSGL) threads the bilayer. At 228–294 (ALLRARWRRR…ARRARAHDVE (67 aa)) the chain is on the cytoplasmic side. A disordered region spans residues 238 to 266 (SRRPPPASGPDSRRRWGAHGPRSASASSA). The helical transmembrane segment at 295–321 (MVGQLVGIMVVSCICWSPMLVLVALAV) threads the bilayer. Over 322-332 (GGWSSTSLQRP) the chain is Extracellular. The helical transmembrane segment at 333 to 354 (LFLAVRLASWNQILDPWVYILL) threads the bilayer. The Cytoplasmic segment spans residues 355 to 402 (RQAVLRQLLRLLPPRAGAKGGPAGLGLTPSAWEASSLRSSRHSGLSHF).

This sequence belongs to the G-protein coupled receptor 1 family. Phosphorylated. As to expression, abundant in kidney. Lower level expression in lung, skeletal muscle and spleen, lowest expression in testis and not detected in liver brain and heart.

It localises to the cell membrane. Functionally, receptor for prostaglandin E2 (PGE2). The activity of this receptor is mediated by G(q) proteins which activate a phosphatidylinositol-calcium second messenger system. May play a role as an important modulator of renal function. Implicated the smooth muscle contractile response to PGE2 in various tissues. The chain is Prostaglandin E2 receptor EP1 subtype (PTGER1) from Homo sapiens (Human).